The primary structure comprises 566 residues: Class II hydrophobin FOXG_02748 (566 aa).

An N-terminal signal peptide occupies residues 1–22; the sequence is MKSKSIMAASTVMELALAQASA. Cystine bridges form between Cys-497–Cys-546, Cys-507–Cys-537, Cys-508–Cys-520, and Cys-547–Cys-558.

The protein belongs to the cerato-ulmin hydrophobin family. As to quaternary structure, homodimer. Homodimers further self-assemble to form highly ordered films at water-air interfaces through intermolecular interactions.

The protein resides in the secreted. Its subcellular location is the cell wall. In terms of biological role, aerial growth, conidiation, and dispersal of filamentous fungi in the environment rely upon a capability of their secreting small amphipathic proteins called hydrophobins (HPBs) with low sequence identity. Class I can self-assemble into an outermost layer of rodlet bundles on aerial cell surfaces, conferring cellular hydrophobicity that supports fungal growth, development and dispersal; whereas Class II form highly ordered films at water-air interfaces through intermolecular interactions but contribute nothing to the rodlet structure. FOXG_02748 is a class II hydrophobin that is likely required for plant colonization. The protein is Class II hydrophobin FOXG_02748 of Fusarium oxysporum f. sp. lycopersici (strain 4287 / CBS 123668 / FGSC 9935 / NRRL 34936) (Fusarium vascular wilt of tomato).